The following is a 206-amino-acid chain: Protein-methionine-sulfoxide reductase heme-binding subunit MsrQ (206 aa).

A run of 6 helical transmembrane segments spans residues 10 to 30, 42 to 62, 75 to 95, 110 to 130, 147 to 167, and 169 to 189; these read VFIA…SAVL, LGLG…LQKL, LGLW…VFVL, PYII…VTSN, LVYV…RADL, and EWAI…PPVM.

This sequence belongs to the MsrQ family. As to quaternary structure, heterodimer of a catalytic subunit (MsrP) and a heme-binding subunit (MsrQ). It depends on FMN as a cofactor. Requires heme b as cofactor.

The protein localises to the cell inner membrane. In terms of biological role, part of the MsrPQ system that repairs oxidized periplasmic proteins containing methionine sulfoxide residues (Met-O), using respiratory chain electrons. Thus protects these proteins from oxidative-stress damage caused by reactive species of oxygen and chlorine generated by the host defense mechanisms. MsrPQ is essential for the maintenance of envelope integrity under bleach stress, rescuing a wide series of structurally unrelated periplasmic proteins from methionine oxidation. MsrQ provides electrons for reduction to the reductase catalytic subunit MsrP, using the quinone pool of the respiratory chain. The chain is Protein-methionine-sulfoxide reductase heme-binding subunit MsrQ from Pseudomonas fluorescens (strain SBW25).